Here is a 565-residue protein sequence, read N- to C-terminus: Perivitellin-2 67 kDa subunit (565 aa).

The signal sequence occupies residues 1-26; that stretch reads MSQLRWWVVSQLLLLIVVCILDHSEG. The region spanning 27–340 is the MACPF domain; it reads ARVCPKIVPG…AKVANLDRLT (314 aa).

Perivitellin-2 is a heterooctamer of 4 identical 98 kDa heterodimers, each composed of one 31 kDa and one 67 kDa subunits. The 98 kDa heterodimer subunits are held together by disulfide bridges while the heterodimers are assembled into the native perivitellin-2 octamer by non-covalent forces. In terms of processing, glycosylated. Contains four O-linked and one N-linked oligosaccharide bonds. The protein contains 2.5% of carbohydrates (high levels of mannose, galactose, and NAcGlucosamine, and small amounts of NacGalactosamine). Post-translationally, PV2 is a very high density lipoprotein (VHDL). It contains 3.75% of lipids. The major lipid classes are free sterols and phospholipids and also have significant quantities of energy-providing triacylglycerides and free fatty acids. As to expression, produced by albumen secretory cells. Found in developing eggs.

Its subcellular location is the secreted. It localises to the target cell membrane. Its function is as follows. The egg defensive protein perivitellin-2 is a pore-forming two-subunit glycoprotein that affects both the nervous and digestive systems of mammals. In addition, it is a source of both structural and energetic molecules during embryonic development. The tachylectin subunit (31 kDa) binds target membranes while the MACPF subunit (67 kDa) disrupts lipid bilayers forming large pores altering the plasma membrance conductance. Both in vivo and in vitro, the protein shows wide pH range stability and is resistant to enzymatic proteolysis from gastrointestinal environments. It specifically binds mature enterocytes but does not cause cell disruption on caco-2 (human colorectal adenocarcinoma cells) or rat intestinal cells. After oral administration to mice, it binds enterocytes and induces large dose-dependent morphological changes on their small intestine mucosa, reducing the absorptive surface. Additionally, it is detected in the Peyer's patches where it activates lymphoid follicles and triggers apoptosis. The toxin can also traverse the intestinal barrier and induce oral adaptive immunity with evidence of circulating antibody response. The toxin also shows hemagglutination properties thanks to the tachylectin subunit, but does not show hemolytic activity. In addition to enterotoxin activity, the toxin also acts as a neurotoxin, since an intraperitoneal injection induces paralysis of the mice rear limbs, followed by death. This Pomacea canaliculata (Golden apple snail) protein is Perivitellin-2 67 kDa subunit.